Here is a 498-residue protein sequence, read N- to C-terminus: Cytochrome P450 monooxygenase idtP (498 aa).

The first 20 residues, 1 to 20 (MFLLHILAIGACLLWYFVRS), serve as a signal peptide directing secretion. C439 contributes to the heme binding site.

It belongs to the cytochrome P450 family. It depends on heme as a cofactor.

The protein operates within secondary metabolite biosynthesis. Its function is as follows. Cytochrome P450 monooxygenase; part of the gene cluster that mediates the biosynthesis of paspalitrems, indole-diterpene (IDT) mycotoxins that are potent tremorgens in mammals. The geranylgeranyl diphosphate (GGPP) synthase idtG is proposed to catalyze the first step in IDT biosynthesis via catalysis of a series of iterative condensations of isopentenyl diphosphate (IPP) with dimethylallyl diphosphate (DMAPP), geranyl diphosphate (GPP), and farnesyl diphosphate (FPP), to form GGPP. Condensation of indole-3-glycerol phosphate with GGPP by the prenyltransferase idtC then forms 3-geranylgeranylindole (3-GGI). Epoxidation of the two terminal alkenes of the geranylgeranyl moiety by the FAD-dependent monooxygenase idtM, and cyclization by the terpene cyclase idtB then leads to the production of paspaline. The cytochrome P450 monooxygenase idtP then catalyzes oxidative elimination of the pendant methyl group at C-12 of paspaline and generates the C-10 ketone to yield 13-desoxypaxilline. The cytochrome P450 monooxygenase idtQ may catalyze the C-13 oxidation of 13-desoxypaxilline to afford paxilline. Considering that both paspalicine and paxilline were detected in C.paspali, idtQ also catalyzes the formation of paspalinine from 13-desoxypaxilline via paspalicine as an intermediate. Finally, the alpha-prenyltransferase idtF prenylates paspalinine at the C-20 or the C-21 positions to yield paspalitrems A and C, respectively. The hydroxylation of paspalitrem A at C-32 by a still unknown oxidase affords paspalitrem B. The chain is Cytochrome P450 monooxygenase idtP from Claviceps paspali (Rye ergot fungus).